The chain runs to 269 residues: Ubiquinone/menaquinone biosynthesis C-methyltransferase UbiE (269 aa).

S-adenosyl-L-methionine is bound by residues threonine 92, aspartate 113, and 141–142 (NA).

This sequence belongs to the class I-like SAM-binding methyltransferase superfamily. MenG/UbiE family.

It carries out the reaction a 2-demethylmenaquinol + S-adenosyl-L-methionine = a menaquinol + S-adenosyl-L-homocysteine + H(+). It catalyses the reaction a 2-methoxy-6-(all-trans-polyprenyl)benzene-1,4-diol + S-adenosyl-L-methionine = a 5-methoxy-2-methyl-3-(all-trans-polyprenyl)benzene-1,4-diol + S-adenosyl-L-homocysteine + H(+). Its pathway is quinol/quinone metabolism; menaquinone biosynthesis; menaquinol from 1,4-dihydroxy-2-naphthoate: step 2/2. It functions in the pathway cofactor biosynthesis; ubiquinone biosynthesis. Functionally, methyltransferase required for the conversion of demethylmenaquinol (DMKH2) to menaquinol (MKH2) and the conversion of 2-polyprenyl-6-methoxy-1,4-benzoquinol (DDMQH2) to 2-polyprenyl-3-methyl-6-methoxy-1,4-benzoquinol (DMQH2). The chain is Ubiquinone/menaquinone biosynthesis C-methyltransferase UbiE from Brucella suis (strain ATCC 23445 / NCTC 10510).